The following is a 60-amino-acid chain: Large ribosomal subunit protein bL32 (60 aa).

This sequence belongs to the bacterial ribosomal protein bL32 family.

This is Large ribosomal subunit protein bL32 (rpmF) from Thermotoga maritima (strain ATCC 43589 / DSM 3109 / JCM 10099 / NBRC 100826 / MSB8).